A 203-amino-acid polypeptide reads, in one-letter code: Vexin (203 aa).

The segment covering 59–70 has biased composition (basic and acidic residues); sequence HRTDRRDGEGRW. Positions 59 to 101 are disordered; it reads HRTDRRDGEGRWSGRFQNPRLQGPHPAKTPARPVGTSEPKSAN.

The protein belongs to the vexin family.

It is found in the cell membrane. It localises to the nucleus. Its function is as follows. Required for neurogenesis in the neural plate and retina. Strongly cooperates with neural bHLH factors to promote neurogenesis. This Bos taurus (Bovine) protein is Vexin.